A 268-amino-acid chain; its full sequence is Protein CDV3 homolog (268 aa).

Residues 40 to 50 show a composition bias toward basic and acidic residues; that stretch reads KREVVKPKKPE. Disordered regions lie at residues 40 to 145 and 184 to 268; these read KREV…ERVG and QQAG…DEAS. The segment covering 51 to 61 has biased composition (low complexity); it reads AAAGGVAVVGE. Positions 76–85 are enriched in acidic residues; that stretch reads VEEEWKEFEE. The span at 98–107 shows a compositional bias: polar residues; it reads QLSTITAQES. Residues 123-132 show a composition bias toward acidic residues; it reads NYDEDDEDSN. Residues 221 to 239 show a composition bias toward basic and acidic residues; sequence RPEEQRKKKNEPAFEEVRH.

It belongs to the CDV3 family.

The protein is Protein CDV3 homolog of Drosophila yakuba (Fruit fly).